The primary structure comprises 2117 residues: Tudor domain-containing 6 (2117 aa).

5 Tudor domains span residues 62-118 (DGNP…FFYL), 291-350 (AENL…FFRM), 527-584 (KPVV…FQQL), 757-816 (EPLL…FLKM), and 974-1030 (PQTF…AGDI). The tract at residues 1125 to 1216 (ASACKKESST…SSKPEVVKPK (92 aa)) is disordered. The segment covering 1127-1152 (ACKKESSTGPKRDAIDQVPKSRESHA) has biased composition (basic and acidic residues). Composition is skewed to polar residues over residues 1153–1174 (IQRS…STNG) and 1181–1209 (DSGT…TSSK). 2 consecutive Tudor domains span residues 1282–1340 (DIHE…FASF) and 1485–1543 (CMPV…LSDV).

As to quaternary structure, interacts (via Tudor domain) with buc (when dimethylated on arginine residues); and may be responsible for recruitment of different protein complexes to germ plasm.

It localises to the cytoplasm. Tudor domain-containing protein involved in germ cell development, more specifically the formation of chromatoid body (during spermiogenesis), Balbiani body (during oogenesis), germ plasm (upon fertilization), and for proper miRNA expression and spliceosome maturation. Required for Balbiani body and germ plasm formation and mobility through interaction with dimethylated arginines in the prion-like protein Bucky ball (buc). Coordinates transcript deposition into future primordial germ cells. Interacts with known germ plasm mRNAs such as vasa, dazl, nanos3 and hook2. In Danio rerio (Zebrafish), this protein is Tudor domain-containing 6.